We begin with the raw amino-acid sequence, 859 residues long: Cation/H(+) antiporter 24 (859 aa).

12 helical membrane passes run 64 to 84 (AFSTFLIEAIIIIFFIKVVSI), 92 to 112 (PRIVSEIIGGMMIGPSMFGGI), 122 to 142 (PIANYICANIGLMGFFYFLFL), 161 to 181 (YIAAIGVIVPIICVGSVGMAM), 194 to 214 (SIGGVVFALSFTSFPVIYTVL), 227 to 247 (FAMSVALLGDMAGVYVIVIFE), 258 to 278 (YSVFWFLVSVVIFAAFMLLVV), 291 to 311 (EGTLVNQNYIVMILMGVLASC), 312 to 332 (FLTDMFGLSIAVGPIWLGLLV), 348 to 368 (TFIYEFLMPFTYALVGQGTNI), 384 to 404 (FYMTVVGFITKFLSTAFAALF), and 438 to 458 (IVGFPGYTVMVLHTVVVTAVT). Residues 538-566 (IDHEQRKEEEEEEYEEEEEEPERKQSGRI) are disordered. The span at 546–557 (EEEEEYEEEEEE) shows a compositional bias: acidic residues. At S857 the chain carries Phosphoserine.

Belongs to the monovalent cation:proton antiporter 2 (CPA2) transporter (TC 2.A.37) family. CHX (TC 2.A.37.4) subfamily. In terms of tissue distribution, specifically expressed in pollen.

Its subcellular location is the membrane. Its function is as follows. May operate as a cation/H(+) antiporter. This Arabidopsis thaliana (Mouse-ear cress) protein is Cation/H(+) antiporter 24 (CHX24).